An 873-amino-acid polypeptide reads, in one-letter code: Potassium voltage-gated channel subfamily KQT member 3 (873 aa).

The tract at residues 1 to 41 (MGLKARRAAGAAGGGGGEGGGGGGGAANPAGGDSAVAGDEE) is disordered. Residues 1 to 121 (MGLKARRAAG…IYDALERPRG (121 aa)) are Cytoplasmic-facing. Over residues 11 to 26 (AAGGGGGEGGGGGGGA) the composition is skewed to gly residues. Position 82 is a phosphothreonine (Thr82). Residues 122–144 (WALLYHALVFLIVLGCLILAVLT) form a helical membrane-spanning segment. Over 145–154 (TFKEYETVSG) the chain is Extracellular. Residues 155-176 (DWLLLLETFAIFIFGAEFALRI) form a helical membrane-spanning segment. The Cytoplasmic portion of the chain corresponds to 177–194 (WAAGCCCRYKGWRGRLKF). A helical transmembrane segment spans residues 195–214 (ARKPLCMLDIFVLIASVPVV). Residues 215-226 (AVGNQGNVLATS) lie on the Extracellular side of the membrane. The chain crosses the membrane as a helical; Voltage-sensor span at residues 227–245 (LRSLRFLQILRMLRMDRRG). An a 1,2-diacyl-sn-glycero-3-phospho-(1D-myo-inositol-4,5-bisphosphate)-binding site is contributed by Arg244. The Cytoplasmic portion of the chain corresponds to 246 to 257 (GTWKLLGSAICA). The chain crosses the membrane as a helical span at residues 258 to 283 (HSKELITAWYIGFLTLILSSFLVYLV). Position 260 (Lys260) interacts with a 1,2-diacyl-sn-glycero-3-phospho-(1D-myo-inositol-4,5-bisphosphate). Topologically, residues 284 to 303 (EKDVPEMDAQGEEMKEEFET) are extracellular. Residues 304 to 316 (YADALWWGLITLA) constitute an intramembrane region (pore-forming). Positions 317 to 322 (TIGYGD) match the Selectivity filter motif. The Extracellular segment spans residues 317-327 (TIGYGDKTPKT). The chain crosses the membrane as a helical span at residues 328–354 (WEGRLIAATFSLIGVSFFALPAGILGS). Residues 355–873 (GLALKVQEQH…SIWTPSNKPT (519 aa)) lie on the Cytoplasmic side of the membrane. The tract at residues 357–538 (ALKVQEQHRQ…RLYKKKFKET (182 aa)) is mediates interaction with calmodulin. Lys367 lines the a 1,2-diacyl-sn-glycero-3-phospho-(1D-myo-inositol-4,5-bisphosphate) pocket. 3 disordered regions span residues 575 to 603 (PGPPSTPKHKKSQKGSAFTYPSQQSPRNE), 723 to 742 (RGGPSSTKAQANLPSSGSTY), and 766 to 873 (ELQG…NKPT). 3 stretches are compositionally biased toward polar residues: residues 588–601 (KGSAFTYPSQQSPR), 725–741 (GPSSTKAQANLPSSGST), and 844–873 (DPFTPSGSMPMSSTGDGISDSIWTPSNKPT).

It belongs to the potassium channel family. KQT (TC 1.A.1.15) subfamily. Kv7.3/KCNQ3 sub-subfamily. Heterotetramer with KCNQ2; forms heterotetrameric M-channel responsible for the native M-current. Interacts with calmodulin; the interaction is calcium-independent, constitutive and participates in the proper assembly of a functional M-channel. Heteromultimer with KCNQ5. May associate with KCNE2. Interacts with IQCJ-SCHIP1. Interacts (via the pore module) with SLC5A3/SMIT1; forms a coregulatory complex that alters ion selectivity, voltage dependence and gating kinetics of the channel. KCNQ2/KCNQ3 are ubiquitinated by NEDD4L. Ubiquitination leads to protein degradation. Degradation induced by NEDD4L is inhibited by USP36. As to expression, expressed in brain and sympathetic ganglia. In brain, expressed in cortex, hippocampus and at much lower levels in cerebellum. In sympathetic ganglia, expressed at approximately equal levels in both superior cervical ganglia and prevertebral ganglia.

The protein localises to the cell membrane. The enzyme catalyses K(+)(in) = K(+)(out). The catalysed reaction is Rb(+)(in) = Rb(+)(out). It catalyses the reaction Cs(+)(in) = Cs(+)(out). It carries out the reaction Na(+)(in) = Na(+)(out). Phosphatidylinositol-4,5-bisphosphate (PIP2) potentiates the activation of KCNQ channels by enhancing the electro-mechanical coupling of the voltage-sensing domain (VSD) and the pore-forming domain (PD). In the closed state of the channel, PIP2 is anchored at the S2-S3 loop; upon channel activation, PIP2 interacts with the S4-S5 linker and is involved in channel gating. Calcium suppresses KCNQ2-KCNQ3 channel currents, with calcium-bound calmodulin inducing a change in channel configuration which leads to the reduction of channel affinity for PIP2 and subsequent current suppression. M-channel is blocked by XE991. Pore-forming subunit of the voltage-gated potassium (Kv) M-channel which is responsible for the M-current, a key controller of neuronal excitability. M-channel is composed of pore-forming subunits KCNQ2 and KCNQ3 assembled as heterotetramers, each subunit containing a voltage sensing domain (VSD) and a pore-forming domain (PD). The native M-current has a slowly activating and deactivating potassium conductance which plays a critical role in determining the subthreshold electrical excitability of neurons as well as the responsiveness to synaptic inputs. M-channel is selectively permeable in vitro to other cations besides potassium, in decreasing order of affinity K(+) &gt; Rb(+) &gt; Cs(+) &gt; Na(+). M-channel association with SLC5A3/SMIT1 alters channel ion selectivity, increasing Na(+) and Cs(+) permeation relative to K(+). Suppressed by activation of M1 muscarinic acetylcholine receptors. KCNQ3 also associates with KCNQ5 to form a functional channel in vitro and may also contribute to the M-current in brain. In Rattus norvegicus (Rat), this protein is Potassium voltage-gated channel subfamily KQT member 3.